We begin with the raw amino-acid sequence, 347 residues long: Single-pass membrane and coiled-coil domain-containing protein 2 (347 aa).

The segment at Met1 to Val89 is disordered. Basic and acidic residues-rich tracts occupy residues Gly10–Asp21, Glu36–Ser51, and Tyr60–Glu86. The stretch at Asp139–Met238 forms a coiled coil. At Ser178 the chain carries Phosphoserine. Positions Gly243–Pro274 are disordered. The segment covering Asp253–Leu262 has biased composition (acidic residues). A compositionally biased stretch (low complexity) spans Val263–Ser273. A helical transmembrane segment spans residues Leu288–Asp308.

It localises to the membrane. The polypeptide is Single-pass membrane and coiled-coil domain-containing protein 2 (Smco2) (Mus musculus (Mouse)).